Consider the following 721-residue polypeptide: Homeobox-leucine zipper protein HDG2 (721 aa).

Residues 17–70 (NNHNYNHEDNNNEGFLRDDEFDSPNTKSGSENQEGGSGNDQDPLHPNKKKRYHR) are disordered. Positions 21-34 (YNHEDNNNEGFLRD) are enriched in basic and acidic residues. A DNA-binding region (homeobox) is located at residues 64-123 (KKKRYHRHTQLQIQEMEAFFKECPHPDDKQRKQLSRELNLEPLQVKFWFQNKRTQMKNHH). A coiled-coil region spans residues 120–194 (KNHHERHENS…DRISAIAAKY (75 aa)). Positions 242-468 (TESDKPVIID…LDRQCERLAS (227 aa)) constitute an START domain.

It belongs to the HD-ZIP homeobox family. Class IV subfamily. As to quaternary structure, interacts with AIL7/PLT7, ANT, BBM and AIL1. Expressed in hairless cell files of the hypocotyl epidermis. Expressed in shoot apical meristem (SAM) with higher levels in L1 cells and the epidermal layer of young leaves. Expressed in primary root tips, in the L1 of apical inflorescence meristems, early flower primordia, carpel epidermis, ovule primordia, nucellus, chalaze and seed coat.

The protein resides in the nucleus. Its function is as follows. Probable transcription factor. Involved, together with PDF2, in the regulation of flower organs development by promoting the expression of APETALA 3 (AP3) in the epidermis and internal cell layers of developing flowers. The chain is Homeobox-leucine zipper protein HDG2 from Arabidopsis thaliana (Mouse-ear cress).